A 782-amino-acid polypeptide reads, in one-letter code: Polyribonucleotide nucleotidyltransferase (782 aa).

Mg(2+) is bound by residues aspartate 514 and aspartate 520. Positions 580-639 constitute a KH domain; sequence PRIITIKIPVDQIGAVIGPKGKIINQIQDDTGAEITIEDDGTIYIGATEGTAAEAARAAI. Positions 651 to 723 constitute an S1 motif domain; that stretch reads GERYLGTVVK…ARGKLSLVPV (73 aa). The span at 734–753 shows a compositional bias: low complexity; that stretch reads AGAGESAASGGAPRSAGGPQ. The interval 734–782 is disordered; it reads AGAGESAASGGAPRSAGGPQPREHQGPGRPRGRGGDHGGEGRQRTRRRH. Residues 766 to 776 are compositionally biased toward basic and acidic residues; the sequence is RGGDHGGEGRQ.

The protein belongs to the polyribonucleotide nucleotidyltransferase family. The cofactor is Mg(2+).

It localises to the cytoplasm. The catalysed reaction is RNA(n+1) + phosphate = RNA(n) + a ribonucleoside 5'-diphosphate. Involved in mRNA degradation. Catalyzes the phosphorolysis of single-stranded polyribonucleotides processively in the 3'- to 5'-direction. The chain is Polyribonucleotide nucleotidyltransferase from Acidothermus cellulolyticus (strain ATCC 43068 / DSM 8971 / 11B).